Consider the following 115-residue polypeptide: MSSTTTQAFSLKTRQAVDEDALLTEEDRVVKEATKGEDCTTRRRACKNCTCGRAELERKMLAEGKKVEMPQMPAGGCGNCAKGDAFRCATCPFLGQPAFDNTSDGKVKLNLTDDI.

Residues valine 30–isoleucine 115 form a disordered region. [2Fe-2S] cluster contacts are provided by cysteine 39, cysteine 46, cysteine 49, and cysteine 51. The tract at residues cysteine 39–cysteine 51 is fe-S binding site A. Residues cysteine 77, cysteine 80, cysteine 88, and cysteine 91 each contribute to the [4Fe-4S] cluster site. 2 consecutive short sequence motifs (cx2C motif) follow at residues cysteine 77–cysteine 80 and cysteine 88–cysteine 91. A fe-S binding site B region spans residues cysteine 77 to cysteine 91.

This sequence belongs to the anamorsin family. Monomer. Requires [2Fe-2S] cluster as cofactor. It depends on [4Fe-4S] cluster as a cofactor.

The protein localises to the cytoplasm. It is found in the mitochondrion intermembrane space. Component of the cytosolic iron-sulfur (Fe-S) protein assembly (CIA) machinery. Required for the maturation of extramitochondrial Fe-S proteins. Part of an electron transfer chain functioning in an early step of cytosolic Fe-S biogenesis, facilitating the de novo assembly of a [4Fe-4S] cluster on the cytosolic Fe-S scaffold complex. Electrons are transferred from NADPH via a FAD- and FMN-containing diflavin oxidoreductase. Together with the diflavin oxidoreductase, also required for the assembly of the diferric tyrosyl radical cofactor of ribonucleotide reductase (RNR), probably by providing electrons for reduction during radical cofactor maturation in the catalytic small subunit. The sequence is that of Anamorsin homolog 1 from Trypanosoma cruzi (strain CL Brener).